Here is a 198-residue protein sequence, read N- to C-terminus: NAD(P)H dehydrogenase (quinone) (198 aa).

The region spanning 4–189 is the Flavodoxin-like domain; it reads ILVLYYSMYG…SIARYQGEYV (186 aa). Residues 10–15 and 78–80 contribute to the FMN site; these read SMYGHI and TRF. Tyr12 is an NAD(+) binding site. Trp98 is a substrate binding site. FMN is bound by residues 113 to 118 and His133; that span reads STGTGG.

It belongs to the WrbA family. The cofactor is FMN.

The enzyme catalyses a quinone + NADH + H(+) = a quinol + NAD(+). It catalyses the reaction a quinone + NADPH + H(+) = a quinol + NADP(+). The polypeptide is NAD(P)H dehydrogenase (quinone) (Salmonella paratyphi B (strain ATCC BAA-1250 / SPB7)).